The chain runs to 375 residues: Actin (375 aa).

The protein belongs to the actin family.

The protein localises to the cytoplasm. Its subcellular location is the cytoskeleton. It catalyses the reaction ATP + H2O = ADP + phosphate + H(+). Its function is as follows. Actins are highly conserved proteins that are involved in various types of cell motility and are ubiquitously expressed in all eukaryotic cells. This is Actin from Giardia intestinalis (Giardia lamblia).